Reading from the N-terminus, the 315-residue chain is Biotin synthase (315 aa).

One can recognise a Radical SAM core domain in the interval 39 to 266 (NSLQFATLLS…KSAIRLTAGR (228 aa)). [4Fe-4S] cluster-binding residues include Cys54, Cys58, and Cys61. The [2Fe-2S] cluster site is built by Cys98, Cys129, Cys189, and Arg261.

It belongs to the radical SAM superfamily. Biotin synthase family. In terms of assembly, homodimer. It depends on [4Fe-4S] cluster as a cofactor. [2Fe-2S] cluster is required as a cofactor.

It carries out the reaction (4R,5S)-dethiobiotin + (sulfur carrier)-SH + 2 reduced [2Fe-2S]-[ferredoxin] + 2 S-adenosyl-L-methionine = (sulfur carrier)-H + biotin + 2 5'-deoxyadenosine + 2 L-methionine + 2 oxidized [2Fe-2S]-[ferredoxin]. The protein operates within cofactor biosynthesis; biotin biosynthesis; biotin from 7,8-diaminononanoate: step 2/2. Its function is as follows. Catalyzes the conversion of dethiobiotin (DTB) to biotin by the insertion of a sulfur atom into dethiobiotin via a radical-based mechanism. The polypeptide is Biotin synthase (Legionella pneumophila (strain Paris)).